Consider the following 397-residue polypeptide: Lysophospholipid transporter LplT (397 aa).

Helical transmembrane passes span 16–36 (MMAVIVAQFLSAFGDNALLFA), 53–73 (VLQMVFVCAYILLAPFVGQVA), 91–111 (LGAVVIVFGGNPFVGYTLVGV), 139–159 (LMESSTIAAILIGSMAGGMLA), 164–184 (GAALGVCALAYAGAVGANLLI), 229–249 (WGAGVTLRFLLVLWVPVALGI), 257–277 (YLNAMVAVGIVAGAGAAAKLV), 282–302 (VSRCMPAGILIGIAVIFFSLQ), 304–324 (AALPAYLLLLLIGFFGGFFVV), 344–364 (IAVQNLGENTAMLLMLGLYSL), and 372–392 (VVGIGVGFGAIFALAIAGLWL).

It belongs to the major facilitator superfamily. LplT (TC 2.A.1.42) family.

It localises to the cell inner membrane. Its function is as follows. Catalyzes the facilitated diffusion of 2-acyl-glycero-3-phosphoethanolamine (2-acyl-GPE) into the cell. The protein is Lysophospholipid transporter LplT of Cronobacter sakazakii (strain ATCC BAA-894) (Enterobacter sakazakii).